A 157-amino-acid chain; its full sequence is UPF0225 protein PSPTO_4127 (157 aa).

This sequence belongs to the UPF0225 family.

The polypeptide is UPF0225 protein PSPTO_4127 (Pseudomonas syringae pv. tomato (strain ATCC BAA-871 / DC3000)).